Reading from the N-terminus, the 222-residue chain is uncharacterized protein (222 aa).

A run of 2 helical transmembrane segments spans residues 22-42 (IRVI…FLYI) and 189-209 (AICL…FCLV).

Its subcellular location is the cell membrane. This is an uncharacterized protein from Escherichia coli (strain K12).